The sequence spans 42 residues: Photosystem I reaction center subunit IX (42 aa).

Residues 8–28 (YLSTAPVLLTIWLSFTAALVI) traverse the membrane as a helical segment.

The protein belongs to the PsaJ family.

It localises to the plastid. The protein localises to the chloroplast thylakoid membrane. Functionally, may help in the organization of the PsaE and PsaF subunits. The sequence is that of Photosystem I reaction center subunit IX from Guillardia theta (Cryptophyte).